The chain runs to 310 residues: 2-methoxy-6-polyprenyl-1,4-benzoquinol methylase, mitochondrial (310 aa).

The N-terminal 6 residues, 1 to 6 (MAHMRS), are a transit peptide targeting the mitochondrion. Residues Thr-99, Asp-154, and 182–183 (DA) contribute to the S-adenosyl-L-methionine site.

It belongs to the class I-like SAM-binding methyltransferase superfamily. MenG/UbiE family. In terms of assembly, component of a multi-subunit COQ enzyme complex, composed of at least coq3, coq4, coq5, coq6, coq7 and coq9.

The protein localises to the mitochondrion inner membrane. It carries out the reaction a 2-methoxy-6-(all-trans-polyprenyl)benzene-1,4-diol + S-adenosyl-L-methionine = a 5-methoxy-2-methyl-3-(all-trans-polyprenyl)benzene-1,4-diol + S-adenosyl-L-homocysteine + H(+). It functions in the pathway cofactor biosynthesis; ubiquinone biosynthesis. In terms of biological role, methyltransferase required for the conversion of 2-polyprenyl-6-methoxy-1,4-benzoquinol (DDMQH2) to 2-polyprenyl-3-methyl-6-methoxy-1,4-benzoquinol (DMQH2). In Xenopus laevis (African clawed frog), this protein is 2-methoxy-6-polyprenyl-1,4-benzoquinol methylase, mitochondrial.